Reading from the N-terminus, the 84-residue chain is Acetylcholine receptor subunit alpha (84 aa).

2 disulfide bridges follow: C7–C21 and C71–C72. N20 carries N-linked (GlcNAc...) asparagine glycosylation.

It belongs to the ligand-gated ion channel (TC 1.A.9) family. Acetylcholine receptor (TC 1.A.9.1) subfamily. Alpha-1/CHRNA1 sub-subfamily. As to quaternary structure, one of the alpha chains that assemble within the acetylcholine receptor, a pentamer of two alpha chains, a beta, a delta, and a gamma (in immature muscle) or epsilon (in mature muscle) chains. The muscle heteropentamer composed of alpha-1, beta-1, delta, epsilon subunits interacts with the alpha-conotoxin ImII.

Its subcellular location is the postsynaptic cell membrane. It is found in the cell membrane. It catalyses the reaction K(+)(in) = K(+)(out). It carries out the reaction Na(+)(in) = Na(+)(out). Upon acetylcholine binding, the AChR responds by an extensive change in conformation that affects all subunits and leads to opening of an ion-conducting channel across the plasma membrane. The protein is Acetylcholine receptor subunit alpha (CHRNA1) of Felis catus (Cat).